The following is a 106-amino-acid chain: Large ribosomal subunit protein eL42 (106 aa).

The protein belongs to the eukaryotic ribosomal protein eL42 family.

The sequence is that of Large ribosomal subunit protein eL42 (RPL44) from Eremothecium gossypii (strain ATCC 10895 / CBS 109.51 / FGSC 9923 / NRRL Y-1056) (Yeast).